The chain runs to 278 residues: Large ribosomal subunit protein uL2 (278 aa).

2 disordered regions span residues 33 to 53 (LTEG…TSRG) and 221 to 278 (RGVA…KKKR). Residues 269-278 (IRSRHAKKKR) show a composition bias toward basic residues.

This sequence belongs to the universal ribosomal protein uL2 family. In terms of assembly, part of the 50S ribosomal subunit. Forms a bridge to the 30S subunit in the 70S ribosome.

Its function is as follows. One of the primary rRNA binding proteins. Required for association of the 30S and 50S subunits to form the 70S ribosome, for tRNA binding and peptide bond formation. It has been suggested to have peptidyltransferase activity; this is somewhat controversial. Makes several contacts with the 16S rRNA in the 70S ribosome. This Novosphingobium aromaticivorans (strain ATCC 700278 / DSM 12444 / CCUG 56034 / CIP 105152 / NBRC 16084 / F199) protein is Large ribosomal subunit protein uL2.